The sequence spans 106 residues: Large ribosomal subunit protein eL30 (106 aa).

The protein belongs to the eukaryotic ribosomal protein eL30 family.

The sequence is that of Large ribosomal subunit protein eL30 (rpl30e) from Sulfurisphaera tokodaii (strain DSM 16993 / JCM 10545 / NBRC 100140 / 7) (Sulfolobus tokodaii).